A 260-amino-acid polypeptide reads, in one-letter code: Neuraminyllactose-binding hemagglutinin (260 aa).

The first 27 residues, 1–27 (MKTNGHFKDFAWKKCFLGASVVALLVG), serve as a signal peptide directing secretion. A lipid anchor (N-palmitoyl cysteine) is attached at C28. C28 carries the S-diacylglycerol cysteine lipid modification.

It localises to the cell outer membrane. In Helicobacter pylori (strain J99 / ATCC 700824) (Campylobacter pylori J99), this protein is Neuraminyllactose-binding hemagglutinin (hpaA).